The primary structure comprises 404 residues: Phosphopentomutase (404 aa).

Mn(2+) contacts are provided by Asp-10, Asp-297, His-302, Asp-338, His-339, and His-350.

This sequence belongs to the phosphopentomutase family. It depends on Mn(2+) as a cofactor.

Its subcellular location is the cytoplasm. The catalysed reaction is 2-deoxy-alpha-D-ribose 1-phosphate = 2-deoxy-D-ribose 5-phosphate. The enzyme catalyses alpha-D-ribose 1-phosphate = D-ribose 5-phosphate. It participates in carbohydrate degradation; 2-deoxy-D-ribose 1-phosphate degradation; D-glyceraldehyde 3-phosphate and acetaldehyde from 2-deoxy-alpha-D-ribose 1-phosphate: step 1/2. Functionally, isomerase that catalyzes the conversion of deoxy-ribose 1-phosphate (dRib-1-P) and ribose 1-phosphate (Rib-1-P) to deoxy-ribose 5-phosphate (dRib-5-P) and ribose 5-phosphate (Rib-5-P), respectively. The polypeptide is Phosphopentomutase (Colwellia psychrerythraea (strain 34H / ATCC BAA-681) (Vibrio psychroerythus)).